Here is a 767-residue protein sequence, read N- to C-terminus: 5-methyltetrahydropteroyltriglutamate--homocysteine methyltransferase (767 aa).

Residues 16–19 and Lys122 each bind 5-methyltetrahydropteroyltri-L-glutamate; that span reads RELK. Residues 443-445 and Glu496 contribute to the L-homocysteine site; that span reads IGS. L-methionine contacts are provided by residues 443–445 and Glu496; that span reads IGS. 5-methyltetrahydropteroyltri-L-glutamate-binding positions include 527-528 and Trp573; that span reads RC. Asp611 provides a ligand contact to L-homocysteine. Asp611 contributes to the L-methionine binding site. Residue Glu617 participates in 5-methyltetrahydropteroyltri-L-glutamate binding. His653, Cys655, and Glu677 together coordinate Zn(2+). The active-site Proton donor is the His706. A Zn(2+)-binding site is contributed by Cys738.

It belongs to the vitamin-B12 independent methionine synthase family. Zn(2+) is required as a cofactor.

It carries out the reaction 5-methyltetrahydropteroyltri-L-glutamate + L-homocysteine = tetrahydropteroyltri-L-glutamate + L-methionine. The protein operates within amino-acid biosynthesis; L-methionine biosynthesis via de novo pathway; L-methionine from L-homocysteine (MetE route): step 1/1. Functionally, catalyzes the transfer of a methyl group from 5-methyltetrahydrofolate to homocysteine resulting in methionine formation. The polypeptide is 5-methyltetrahydropteroyltriglutamate--homocysteine methyltransferase (Ectopseudomonas mendocina (strain ymp) (Pseudomonas mendocina)).